A 73-amino-acid polypeptide reads, in one-letter code: Small ribosomal subunit protein bS18B (73 aa).

The protein belongs to the bacterial ribosomal protein bS18 family. In terms of assembly, part of the 30S ribosomal subunit. Forms a tight heterodimer with protein bS6.

Its function is as follows. Binds as a heterodimer with protein bS6 to the central domain of the 16S rRNA, where it helps stabilize the platform of the 30S subunit. In Frankia alni (strain DSM 45986 / CECT 9034 / ACN14a), this protein is Small ribosomal subunit protein bS18B.